A 63-amino-acid chain; its full sequence is Large ribosomal subunit protein bL28 (63 aa).

It belongs to the bacterial ribosomal protein bL28 family.

The polypeptide is Large ribosomal subunit protein bL28 (Pelobacter propionicus (strain DSM 2379 / NBRC 103807 / OttBd1)).